The following is a 247-amino-acid chain: Ribonuclease PH (247 aa).

Phosphate-binding positions include Arg87 and 125–127; that span reads GTR.

This sequence belongs to the RNase PH family. In terms of assembly, homohexameric ring arranged as a trimer of dimers.

The catalysed reaction is tRNA(n+1) + phosphate = tRNA(n) + a ribonucleoside 5'-diphosphate. Phosphorolytic 3'-5' exoribonuclease that plays an important role in tRNA 3'-end maturation. Removes nucleotide residues following the 3'-CCA terminus of tRNAs; can also add nucleotides to the ends of RNA molecules by using nucleoside diphosphates as substrates, but this may not be physiologically important. Probably plays a role in initiation of 16S rRNA degradation (leading to ribosome degradation) during starvation. This chain is Ribonuclease PH, found in Frankia casuarinae (strain DSM 45818 / CECT 9043 / HFP020203 / CcI3).